The chain runs to 323 residues: MMDPQIERKLIEIMRVIHESDKPIGARAIADELNNRGYDIGERAVRYHLRILDERGFTRKHGYAGRTLTDLGENEMNDALIGDRFGFVISRIEEMAFRTTYNPETDKGDVVVNISYFDKDDFETVIELISYTAHAGYMISPRVRIFEEDSLEMSLPPGKIGIATVCSVTFDGLLLKAGIPVEPAYGGILQIENKKPARFLDLISYSGTSIDPIKIFMNRTPTSVLEVLEKGEGKILANMRQINSSAYEMTGKILKKAEKVGLAGCITLGEIDEYLLGAPVETGKFGAAVVGGINGICALEETGIEIETNPISTMLDYQTMKEI.

The segment at 11–76 (IEIMRVIHES…TLTDLGENEM (66 aa)) is winged helix-turn-helix. The tract at residues 86 to 323 (GFVISRIEEM…MLDYQTMKEI (238 aa)) is NRD.

It belongs to the NrpR family. In terms of assembly, forms a complex with NrpRII and the general archaeal transcription factors TBP and TFB. Interacts directly with NrpRII.

Its activity is regulated as follows. Under nitrogen limitation, binding of 2-oxoglutarate to the NrpRI/NrpRII complex decreases the binding affinity of NrpRI to DNA as well as the binding affinity of NrpRII to TBP and TFB, which leads to removal of the complex from the operator, RNA polymerase recruitment and initiation of transcription. In terms of biological role, plays a major role in nitrogen regulation. Under nitrogen sufficiency, binds to the nifH and the glnk1 promoters, leading to repression of the transcription of the genes. The protein is Global nitrogen regulator NrpRI of Methanosarcina mazei (strain ATCC BAA-159 / DSM 3647 / Goe1 / Go1 / JCM 11833 / OCM 88) (Methanosarcina frisia).